Here is a 65-residue protein sequence, read N- to C-terminus: uncharacterized protein (65 aa).

C9 acts as the Nucleophile in catalysis. R15 is an active-site residue.

Belongs to the low molecular weight phosphotyrosine protein phosphatase family.

This is an uncharacterized protein from Synechococcus sp. (strain WH8020).